A 582-amino-acid chain; its full sequence is ATP-dependent lipid A-core flippase (582 aa).

6 helical membrane-spanning segments follow: residues Ala-23–Leu-43, Ile-61–Val-81, Ala-140–Tyr-160, Trp-163–Val-183, Ala-247–Ile-267, and Met-273–Leu-293. Residues Ile-26–Arg-308 enclose the ABC transmembrane type-1 domain. One can recognise an ABC transporter domain in the interval Ile-340–Leu-576. Position 374–381 (Gly-374–Ser-381) interacts with ATP.

The protein belongs to the ABC transporter superfamily. Lipid exporter (TC 3.A.1.106) family. As to quaternary structure, homodimer.

It localises to the cell inner membrane. The enzyme catalyses ATP + H2O + lipid A-core oligosaccharideSide 1 = ADP + phosphate + lipid A-core oligosaccharideSide 2.. Its function is as follows. Involved in lipopolysaccharide (LPS) biosynthesis. Translocates lipid A-core from the inner to the outer leaflet of the inner membrane. Transmembrane domains (TMD) form a pore in the inner membrane and the ATP-binding domain (NBD) is responsible for energy generation. This Idiomarina loihiensis (strain ATCC BAA-735 / DSM 15497 / L2-TR) protein is ATP-dependent lipid A-core flippase.